A 492-amino-acid polypeptide reads, in one-letter code: Malonyl-CoA decarboxylase, mitochondrial (492 aa).

The disordered stretch occupies residues 1 to 28 (MRGLGPGLRARRLLPLRSPPRPPGPRGR). The transit peptide at 1 to 38 (MRGLGPGLRARRLLPLRSPPRPPGPRGRRLCGGLAASA) directs the protein to the mitochondrion. The interval 39-189 (MDELLRRAVP…VLKSMLSEWF (151 aa)) is alpha-helical domain. N6-acetyllysine is present on K58. K167 bears the N6-acetyllysine; alternate mark. The residue at position 167 (K167) is an N6-succinyllysine; alternate. Residues 190-492 (SSGFLNLERV…VAQFQNNSKL (303 aa)) are catalytic domain. K210 bears the N6-acetyllysine mark. K221 carries the N6-succinyllysine modification. 298 to 304 (QGVELGT) contacts malonyl-CoA. K316 bears the N6-acetyllysine mark. S328 contacts malonyl-CoA. S328 (proton acceptor) is an active-site residue. K385 carries the N6-acetyllysine; alternate modification. Residue K385 is modified to N6-succinyllysine; alternate. N6-acetyllysine is present on K388. A malonyl-CoA-binding site is contributed by H422. H422 acts as the Proton donor in catalysis. An N6-acetyllysine mark is found at K441 and K471. A Microbody targeting signal motif is present at residues 490-492 (SKL).

As to quaternary structure, homotetramer. Dimer of dimers. The two subunits within a dimer display conformational differences suggesting that at any given moment, only one of the two subunits is competent for malonyl-CoA binding and catalytic activity. Under oxidizing conditions, can form disulfide-linked homotetramers (in vitro). Associates with the peroxisomal targeting signal receptor PEX5. Post-translationally, interchain disulfide bonds may form in peroxisomes (Potential). Interchain disulfide bonds are not expected to form in the reducing environment of the cytoplasm and mitochondria. Acetylation at Lys-471 activates malonyl-CoA decarboxylase activity. Deacetylation at Lys-471 by SIRT4 represses activity, leading to promote lipogenesis.

Its subcellular location is the cytoplasm. It is found in the mitochondrion matrix. It localises to the peroxisome. The protein localises to the peroxisome matrix. The enzyme catalyses malonyl-CoA + H(+) = acetyl-CoA + CO2. The protein operates within metabolic intermediate biosynthesis; acetyl-CoA biosynthesis; acetyl-CoA from malonyl-CoA: step 1/1. Its activity is regulated as follows. Malonyl-CoA decarboxylase activity does not require any cofactors or divalent metal ions. In terms of biological role, catalyzes the conversion of malonyl-CoA to acetyl-CoA. In the fatty acid biosynthesis MCD selectively removes malonyl-CoA and thus assures that methyl-malonyl-CoA is the only chain elongating substrate for fatty acid synthase and that fatty acids with multiple methyl side chains are produced. In peroxisomes it may be involved in degrading intraperoxisomal malonyl-CoA, which is generated by the peroxisomal beta-oxidation of odd chain-length dicarboxylic fatty acids. Plays a role in the metabolic balance between glucose and lipid oxidation in muscle independent of alterations in insulin signaling. Plays a role in controlling the extent of ischemic injury by promoting glucose oxidation. In Mus musculus (Mouse), this protein is Malonyl-CoA decarboxylase, mitochondrial.